Reading from the N-terminus, the 159-residue chain is Oleosin Cor a 12 (159 aa).

Residues 1-10 are compositionally biased toward polar residues; it reads MADRPQQLQV. The interval 1–24 is disordered; the sequence is MADRPQQLQVHPQRGHGHYEGGIK. 3 consecutive transmembrane segments (helical) span residues 45–65, 70–90, and 92–112; these read VGGTLLALAGLTLAGSVIGLL, LFIIFSPVLVPAAIVVGLAVA, and FLSSGALGLTGLSSLSWVLNY.

The protein belongs to the oleosin family. Expressed in seeds.

It is found in the lipid droplet. The protein localises to the membrane. Its function is as follows. May have a structural role to stabilize the lipid body during desiccation of the seed by preventing coalescence of the oil. Probably interacts with both lipid and phospholipid moieties of lipid bodies. May also provide recognition signals for specific lipase anchorage in lipolysis during seedling growth. This is Oleosin Cor a 12 from Corylus avellana (European hazel).